Here is a 236-residue protein sequence, read N- to C-terminus: Ubiquinone biosynthesis O-methyltransferase (236 aa).

Positions 39, 59, 80, and 124 each coordinate S-adenosyl-L-methionine.

Belongs to the methyltransferase superfamily. UbiG/COQ3 family.

It catalyses the reaction a 3-demethylubiquinol + S-adenosyl-L-methionine = a ubiquinol + S-adenosyl-L-homocysteine + H(+). The catalysed reaction is a 3-(all-trans-polyprenyl)benzene-1,2-diol + S-adenosyl-L-methionine = a 2-methoxy-6-(all-trans-polyprenyl)phenol + S-adenosyl-L-homocysteine + H(+). The protein operates within cofactor biosynthesis; ubiquinone biosynthesis. Its function is as follows. O-methyltransferase that catalyzes the 2 O-methylation steps in the ubiquinone biosynthetic pathway. The protein is Ubiquinone biosynthesis O-methyltransferase of Shewanella sp. (strain W3-18-1).